Reading from the N-terminus, the 281-residue chain is Histidine biosynthesis bifunctional protein hisIE, chloroplastic (281 aa).

A chloroplast-targeting transit peptide spans 1-50; the sequence is MAVSYNALAQSLARSSCFIPKPYSFRDTKLRSRSNVVFACNDNKNIALQA. The tract at residues 51-178 is phosphoribosyl-AMP cyclohydrolase; sequence KVDNLLDRIK…NKLALTTLYS (128 aa). Residues 179-281 form a phosphoribosyl-ATP pyrophosphohydrolase region; that stretch reads LESIISKRKE…GIEEKQNRTK (103 aa).

The protein in the N-terminal section; belongs to the PRA-CH family. This sequence in the C-terminal section; belongs to the PRA-PH family. In terms of tissue distribution, ubiquitously expressed throughout development.

It localises to the plastid. Its subcellular location is the chloroplast. The enzyme catalyses 1-(5-phospho-beta-D-ribosyl)-ATP + H2O = 1-(5-phospho-beta-D-ribosyl)-5'-AMP + diphosphate + H(+). It catalyses the reaction 1-(5-phospho-beta-D-ribosyl)-5'-AMP + H2O = 1-(5-phospho-beta-D-ribosyl)-5-[(5-phospho-beta-D-ribosylamino)methylideneamino]imidazole-4-carboxamide. The protein operates within amino-acid biosynthesis; L-histidine biosynthesis; L-histidine from 5-phospho-alpha-D-ribose 1-diphosphate: step 2/9. Its pathway is amino-acid biosynthesis; L-histidine biosynthesis; L-histidine from 5-phospho-alpha-D-ribose 1-diphosphate: step 3/9. The polypeptide is Histidine biosynthesis bifunctional protein hisIE, chloroplastic (HISN2) (Arabidopsis thaliana (Mouse-ear cress)).